The following is a 433-amino-acid chain: Putative purine permease YbbY (433 aa).

At 1–17 the chain is on the periplasmic side; sequence MFNFAVSRESLLSGFQW. A helical membrane pass occupies residues 18–38; the sequence is FFFIFCNTVVVPPTLLSAFQL. Topologically, residues 39–42 are cytoplasmic; that stretch reads PQSS. The chain crosses the membrane as a helical span at residues 43-63; sequence LLTLTQYAFLATALACFAQAF. The Periplasmic segment spans residues 64 to 68; that stretch reads CGHRR. The chain crosses the membrane as a helical span at residues 69–89; the sequence is AIMEGPGGLWWGTILTITLGE. Over 90 to 102 the chain is Cytoplasmic; that stretch reads ASRGTPINDIATS. Residues 103 to 123 form a helical membrane-spanning segment; it reads LAVGIALSGVLTMLIGFSGLG. Over 124 to 130 the chain is Periplasmic; that stretch reads HRLARLF. The chain crosses the membrane as a helical span at residues 131 to 151; the sequence is TPSVMVLFMLMLGAQLTTIFF. Residues 152 to 169 are Cytoplasmic-facing; the sequence is KGMLGLPFGIADPNFKIQ. The helical transmembrane segment at 170-190 threads the bilayer; that stretch reads LPPFALSVAVMCLVLAMIIFL. The Periplasmic segment spans residues 191–196; it reads PQRFAR. The helical transmembrane segment at 197-217 threads the bilayer; it reads YGLLVGTITGWLLWYFCFPSS. Residues 218–230 are Cytoplasmic-facing; the sequence is HSLSGELHWQWFP. A helical transmembrane segment spans residues 231-251; sequence LGSGGALSPGIILTAVITGLV. At 252–288 the chain is on the periplasmic side; sequence NISNTYGAIRGTDVFYPQQGAGNTRYRRSFVATGFMT. A helical transmembrane segment spans residues 289 to 309; the sequence is LITVPLAVIPFSPFVSSIGLL. The Cytoplasmic portion of the chain corresponds to 310-319; sequence TQTGDYTRRS. A helical membrane pass occupies residues 320 to 340; sequence FIYGSVICLLVALVPALTRLF. Topologically, residues 341-345 are periplasmic; it reads CSIPL. Residues 346–366 form a helical membrane-spanning segment; it reads PVSSAVMLVSYLPLLFSALVF. Residues 367-379 lie on the Cytoplasmic side of the membrane; the sequence is SQQITFTARNIYR. Residues 380-400 form a helical membrane-spanning segment; the sequence is LALPLFVGIFLMALPPVYLQD. The Periplasmic segment spans residues 401–407; that stretch reads LPLTLRP. A helical membrane pass occupies residues 408–428; sequence LLSNGLLVGILLAVLMDNLIP. The Cytoplasmic portion of the chain corresponds to 429-433; sequence WERIE.

It belongs to the nucleobase:cation symporter-2 (NCS2) (TC 2.A.40) family.

It localises to the cell inner membrane. The sequence is that of Putative purine permease YbbY (ybbY) from Escherichia coli (strain K12).